The sequence spans 120 residues: Cytochrome c-550 (120 aa).

A helical membrane pass occupies residues 5–25; the sequence is PLIPFLLIAVLGIGLTFFLSV. The Periplasmic portion of the chain corresponds to 26–120; the sequence is KGLDDSREIA…DMAEWVSKIK (95 aa). Cysteine 60, cysteine 63, histidine 64, and methionine 99 together coordinate heme c.

In terms of processing, binds 1 heme c group covalently per subunit.

Its subcellular location is the cell membrane. Functionally, not essential for growth on minimal or rich media. This chain is Cytochrome c-550 (cccA), found in Bacillus subtilis (strain 168).